A 1026-amino-acid polypeptide reads, in one-letter code: MSLPAETDMEDTKPSVVMVDNGDQAQFRFAEFSKNELALDEKSCKEAMDLFGETKHLLVANVLSMGNGTTEEAERNWFAFILYSIKKLAQKNEEIQKDEIENTGLTLCRILRAAKLNIAEFFKELPQFVVKAGPILSNLYGPDWENKLEAKEMHANTIHLKILSKYYKRVFEEFFVSTDANVENNSSVTNRVSEYHRFGWLLFLALRVHAFSRFKDLVTCTNGLISILAILIIHVPARFRSFNIHDSSRFVKKSANGVDLLASLCNLYNTSEDELRKTIEQANNLVADILKKKPCLASECETENLENFDRDGLTYFKDLMEESSLPSSLSVLENDYDHMTRNNGELDERLFINEDDSLLASGSLSRGSVSAGGVKRKIDLMTSPTKMITSPLSPHRSPASHANGIPSSATPMIAATPVSTAMTTAKWLRTVISPLPSKPSQELERFLTSCDKDITSDVIRRAQIILQAIFPSSPLGDRCVTGSLQSANLMDNIWAEQRRLEALKLYYRVLATMCRAEAQILGNNLTSLLTNERFHRCMLACSAELVLATHKTVTMLFPAVLERTGITAFDLSKVIESFIRYEESLPRELRRHLNSLEERLLESLVWEKGSSMYNSLAVARPALSVEINRLGLLAEPMRSLDEIAMDINFSCGGLPPVPSLPKPEPMSAQNGDPRSPKRPCTEHRNVLAERNSFTSPVKDRLLHLSNLKSKLLPPPLQSAFASPTKPNPGGGGETCAETGISVFFSKIVKLGAVRISGMVERLQLSQQIRENVYCLFQRILNQWTSLFFNRHIDQIILCCFYGVAKISQLNLTFREIIYNYRKQPQCKPEVFRSVFVDWSSARRNGSCKQRTGQEHIDIISFYNEVFIPSVKPLLVEIGPGGATTRNDRIPEANNKNDGHLAQCPGSPRISPFPSLPDMSPKKVSATHNVYVSPLRSSKMDALISHSSKSYYACVGESTHAYQSPSKDLTAINNRLNGNRKVRGPLNFDDVDVGLVSDSMVANSLYLQNGSSASSSGAPLKSEQPDS.

The tract at residues threonine 416–leucine 616 is domain A. Residues threonine 416–proline 872 are pocket. The tract at residues alanine 617–glutamate 737 is spacer. The segment at proline 656–cysteine 680 is disordered. Residues threonine 738–proline 872 are domain B. The interval glutamine 1007–serine 1026 is disordered.

This sequence belongs to the retinoblastoma protein (RB) family.

It is found in the nucleus. Functionally, regulator of biological processes that recruits a histone deacetylase to control gene transcription. May play a role in the entry into mitosis, negatively regulating the cell proliferation. Formation of stable complexes with geminiviridae replication-associated proteins may create a cellular environment which favors viral DNA replication. This chain is Retinoblastoma-related protein 1 (RBR1), found in Pisum sativum (Garden pea).